A 208-amino-acid chain; its full sequence is RNA chaperone ProQ (208 aa).

Composition is skewed to basic and acidic residues over residues 99–115 (AQET…EKNK) and 126–135 (PAKDKPENTA). Residues 99–149 (AQETLKESKAKVAEKNKATNKAAAKKAPAKDKPENTAKAKPKTAKKPAKPK) form a disordered region. Over residues 137-149 (AKPKTAKKPAKPK) the composition is skewed to basic residues.

This sequence belongs to the ProQ family.

It is found in the cytoplasm. RNA chaperone with significant RNA binding, RNA strand exchange and RNA duplexing activities. The protein is RNA chaperone ProQ of Idiomarina loihiensis (strain ATCC BAA-735 / DSM 15497 / L2-TR).